A 65-amino-acid polypeptide reads, in one-letter code: Prokaryotic ubiquitin-like protein UBact (65 aa).

A compositionally biased stretch (polar residues) spans 1-17; the sequence is MEVNMPTTEQGQKNKQM. A disordered region spans residues 1-65; it reads MEVNMPTTEQ…ARRYRQRTGE (65 aa). Residues 35-65 are compositionally biased toward basic and acidic residues; that stretch reads KVEKPNTEEILKRMRKVDPDQARRYRQRTGE. Glutamate 65 is covalently cross-linked (Isoglutamyl lysine isopeptide (Glu-Lys) (interchain with K-? in acceptor proteins)).

Belongs to the ubiquitin-like protein UBact family.

May function as a protein modifier covalently attached to lysine residues of substrate proteins. This may serve to target the modified proteins for degradation by proteasomes. This is Prokaryotic ubiquitin-like protein UBact from Methylacidiphilum infernorum (isolate V4) (Methylokorus infernorum (strain V4)).